The chain runs to 284 residues: Para-Rep C3 (284 aa).

One can recognise a CRESS-DNA virus Rep endonuclease domain in the interval 3-98 (TVQSTCWVFT…IEGPWEYGKY (96 aa)). The RCR-1 signature appears at 10–13 (VFTL). The a divalent metal cation site is built by E36 and H42. Residues 42–44 (HLQ) carry the RCR-2 motif. A Nuclear localization signal motif is present at residues 51–71 (AQQSLGQMKAIIPGAHFEKMR). The For DNA cleavage activity role is filled by Y81. The RCR-3 motif lies at 81–84 (YAMK). D86 is a binding site for a divalent metal cation. The short motif at 98–104 (YIKKGSH) is the Nuclear localization signal element. 174-182 (GPKGGEGKS) is an ATP binding site.

Belongs to the nanoviridea/circoviridae replication-associated protein family. Homooligomer (Potential). Rep binds to repeated DNA motifs (iterons). Requires Mg(2+) as cofactor. Mn(2+) is required as a cofactor.

The protein localises to the host nucleus. It carries out the reaction ATP + H2O = ADP + phosphate + H(+). In terms of biological role, initiates and terminates the replication only of its own subviral DNA molecule. The closed circular ssDNA genome is first converted to a superhelical dsDNA. Rep binds a specific hairpin at the genome origin of replication. Introduces an endonucleolytic nick within the intergenic region of the genome, thereby initiating the rolling circle replication (RCR). Following cleavage, binds covalently to the 5'-phosphate of DNA as a tyrosyl ester. The cleavage gives rise to a free 3'-OH that serves as a primer for the cellular DNA polymerase. The polymerase synthesizes the (+) strand DNA by rolling circle mechanism. After one round of replication, a Rep-catalyzed nucleotidyl transfer reaction releases a circular single-stranded virus genome, thereby terminating the replication. Displays origin-specific DNA cleavage, nucleotidyl transferase, ATPase and helicase activities. This is Para-Rep C3 (C3) from Milk vetch dwarf C3 alphasatellite (MVDC3A).